The primary structure comprises 183 residues: UPF0397 protein stu0306/stu0307 (183 aa).

The next 5 membrane-spanning stretches (helical) occupy residues 11 to 31 (ATGIGAALFIIICIFVNIPIF), 44 to 64 (VLFSVIFGSRSIIGFFMGFIG), 74 to 94 (GDISWAWVLASGITGLVIGLF), 111 to 131 (IWFNLAQALGLLIAYGVVTPI), and 149 to 169 (FVAGVANFITIAIGGTLLLAI).

This sequence belongs to the UPF0397 family.

It is found in the cell membrane. This chain is UPF0397 protein stu0306/stu0307, found in Streptococcus thermophilus (strain ATCC BAA-250 / LMG 18311).